The chain runs to 209 residues: MVAQVKICGLNSAASVAASIAGGADYLGFVFFPPSPRAVTAQEAASLAAPIAQPLRKVGLFVNPRDGEIEAVLRELPLDIIQLHDVPVARALQLRERLALPVWRSVGIAAADDLPRDSGGVDALLLDAKPRPDAALPGGNGQAFDWSILADFAPSFAWILAGGLTPDTVADAVRRTGAPIVDVSSGVEQSRGRKDPALIRSFLSAVRNA.

It belongs to the TrpF family.

The catalysed reaction is N-(5-phospho-beta-D-ribosyl)anthranilate = 1-(2-carboxyphenylamino)-1-deoxy-D-ribulose 5-phosphate. It functions in the pathway amino-acid biosynthesis; L-tryptophan biosynthesis; L-tryptophan from chorismate: step 3/5. In Granulibacter bethesdensis (strain ATCC BAA-1260 / CGDNIH1), this protein is N-(5'-phosphoribosyl)anthranilate isomerase.